Here is a 376-residue protein sequence, read N- to C-terminus: Probable ureide permease A3 (376 aa).

Residues 1 to 9 (HLVESKGGA) are Extracellular-facing. The helical transmembrane segment at 10-30 (IACMFLALFFLGTWPALLTML) threads the bilayer. Residues 31–41 (ERRGRLPQHTY) lie on the Cytoplasmic side of the membrane. A helical transmembrane segment spans residues 42-62 (LDYSITNFFAALLIAFTFGEI). The Extracellular portion of the chain corresponds to 63–80 (GKGKPDEPNFLAQLAQDN). Residues 81–101 (WPSVLFAMGGGVVLSLGNLSS) form a helical membrane-spanning segment. Over 102–103 (QY) the chain is Cytoplasmic. A helical membrane pass occupies residues 104 to 124 (AFAFVGLSVTEVITASITVVI). The Extracellular segment spans residues 125-137 (GTTLNYFLDDKIN). A helical membrane pass occupies residues 138–158 (KAEILFPGVGCFLIAVFLGFC). Residues 159–231 (RFNSSNASDN…RAIKVFGKST (73 aa)) lie on the Cytoplasmic side of the membrane. ATP is bound at residue 223–230 (AIKVFGKS). Residues 232 to 252 (LIGLALTFSAGLCFSMFSPAF) form a helical membrane-spanning segment. At 253 to 274 (NLATNDQWHTLPNGIPHLTVYT) the chain is on the extracellular side. Residues 275–295 (AFFYFSISCFVIAIILNITFL) traverse the membrane as a helical segment. Residues 296-317 (YHPVLNLPKSSLKAYLADSDGR) lie on the Cytoplasmic side of the membrane. The helical transmembrane segment at 318–338 (IWALLAGLLCGFGNSLQFMGG) threads the bilayer. Topologically, residues 339-376 (QAAGYQQQSLCRHFLCKHFWGVLLFGEYRRSSRKTYIC) are extracellular.

Belongs to the plant ureide permease (TC 2.A.7.19) family.

The protein resides in the membrane. Its function is as follows. Transports a wide spectrum of oxo derivatives of heterocyclic nitrogen compounds. This chain is Probable ureide permease A3 (A3), found in Vigna unguiculata (Cowpea).